Consider the following 700-residue polypeptide: Calpain-2 catalytic subunit (700 aa).

Ala-2 is subject to N-acetylalanine. Positions 2–19 (AGIAAKLVKDREAAEGLG) are cleaved as a propeptide — anchors to the small subunit. The Calpain catalytic domain occupies 45–344 (LFQDPSFPAI…YSRLEICNLT (300 aa)). Residues Ile-89, Gly-91, and Asp-96 each contribute to the Ca(2+) site. Cys-105 is an active-site residue. Positions 175, 229, and 230 each coordinate Ca(2+). Catalysis depends on residues His-262 and Asn-286. Residues Glu-292, Asp-299, and Glu-323 each coordinate Ca(2+). The domain III stretch occupies residues 345 to 514 (PDTLTSDTYK…KKADYQAVDD (170 aa)). The tract at residues 515 to 529 (EIEANLEEFDISEDD) is linker. The tract at residues 530-700 (IDDGFRRLFA…LISWLCFSVL (171 aa)) is domain IV. Residues Ala-542, Asp-545, Glu-547, Glu-552, Asp-585, Asp-587, Ser-589, Lys-591, Glu-596, Asp-615, Asp-617, Ser-619, Thr-621, Glu-626, Asp-658, and Asn-661 each contribute to the Ca(2+) site. 2 EF-hand domains span residues 572 to 605 (FSIE…TKIQ) and 602 to 637 (TKIQ…AGFK). The 34-residue stretch at 667-700 (VRLETLFKIFKQLDPENTGTIELDLISWLCFSVL) folds into the EF-hand 3 domain.

It belongs to the peptidase C2 family. In terms of assembly, forms a heterodimer with a small (regulatory) subunit (CAPNS1). Interacts with CPEB3; this leads to cleavage of CPEB3. Requires Ca(2+) as cofactor.

Its subcellular location is the cytoplasm. The protein resides in the cell membrane. The catalysed reaction is Broad endopeptidase specificity.. Activated by 200-1000 micromolar concentrations of calcium and inhibited by calpastatin. Functionally, calcium-regulated non-lysosomal thiol-protease which catalyzes limited proteolysis of substrates involved in cytoskeletal remodeling and signal transduction. Proteolytically cleaves MYOC at 'Arg-226'. Proteolytically cleaves CPEB3 following neuronal stimulation which abolishes CPEB3 translational repressor activity, leading to translation of CPEB3 target mRNAs. The chain is Calpain-2 catalytic subunit (CAPN2) from Macaca fascicularis (Crab-eating macaque).